Reading from the N-terminus, the 235-residue chain is Elongation factor Tu, chloroplastic (235 aa).

Residues 1–125 (KNMITGAAQM…AVDSYIPTPE (125 aa)) enclose the tr-type G domain. 47-50 (NKED) serves as a coordination point for GTP.

This sequence belongs to the TRAFAC class translation factor GTPase superfamily. Classic translation factor GTPase family. EF-Tu/EF-1A subfamily.

The protein resides in the plastid. The protein localises to the chloroplast. The enzyme catalyses GTP + H2O = GDP + phosphate + H(+). In terms of biological role, GTP hydrolase that promotes the GTP-dependent binding of aminoacyl-tRNA to the A-site of ribosomes during protein biosynthesis. This chain is Elongation factor Tu, chloroplastic (tufA), found in Mantoniella squamata (Unicellular alga).